The primary structure comprises 575 residues: Acyloxyacyl hydrolase (575 aa).

The N-terminal stretch at 1 to 23 (MQSPWKILTVAPLFLLLSLQSSA) is a signal peptide. Residues 24 to 34 (SPANDDQSRPS) constitute a propeptide that is removed on maturation. In terms of domain architecture, Saposin B-type spans 37-118 (NGHTCVGCVL…HTLEFCKQNT (82 aa)). The interval 38–70 (GHTCVGCVLVVSVIEQLAQVHNSTVQASMERLC) is important for enzyme activity, localization to cytoplasmic vesicles, and protein stability. Disulfide bonds link C41-C114, C44-C108, C70-C83, C123-C453, C160-C169, C206-C230, C249-C329, and C376-C459. Residue N59 is glycosylated (N-linked (GlcNAc...) asparagine). The segment at 173-177 (KLAME) is lipopolysaccharide binding. Residues D184, D186, D188, Y190, D205, N207, D208, D210, V213, D223, D227, N229, N231, I233, and E245 each coordinate Ca(2+). Residue N207 is glycosylated (N-linked (GlcNAc...) asparagine). S263 is an active-site residue. 2 N-linked (GlcNAc...) asparagine glycosylation sites follow: N409 and N466.

In terms of assembly, heterodimer of the large and small subunits; disulfide-linked. Ca(2+) serves as cofactor. Cleaved into a large and a small subunit. In terms of processing, the small subunit is N-glycosylated.

It is found in the secreted. The protein localises to the cytoplasmic vesicle. It carries out the reaction a 3-(acyloxy)acyl derivative of bacterial toxin + H2O = a 3-hydroxyacyl derivative of bacterial toxin + a fatty acid + H(+). With respect to regulation, inhibited by EDTA. Functionally, removes the secondary (acyloxyacyl-linked) fatty acyl chains from the lipid A region of bacterial lipopolysaccharides. By breaking down LPS, terminates the host response to bacterial infection and prevents prolonged and damaging inflammatory responses. In peritoneal macrophages, seems to be important for recovery from a state of immune tolerance following infection by Gram-negative bacteria. This is Acyloxyacyl hydrolase from Homo sapiens (Human).